The chain runs to 211 residues: MQAPHKEHLYKLLVIGDLGVGKTSIIKRYVHQNFSSHYRATIGVDFALKVLHWDPETVVRLQLWDIAGQERFGNMTRVYYREAMGAFIVFDVTRPATFEAVAKWKNDLDSKLSLPNGKPVSVVLLANKCDQGKDVLMNNGLKMDQFCKEHGFVGWFETSAKENINIDEASRCLVKHILANECDLMESIEPDVVKPHLTSTKVASCSGCAKS.

GTP-binding residues include Gly-19, Val-20, Gly-21, Lys-22, Thr-23, Ser-24, Ser-35, Ser-36, Tyr-38, and Thr-41. Residue Thr-23 coordinates Mg(2+). The Switch 1 motif lies at 32–46 (QNFSSHYRATIGVDF). Positions 41 and 65 each coordinate Mg(2+). GTP is bound by residues Gly-68, Lys-128, Asp-130, Ala-160, and Lys-161. Residues 68–81 (GQERFGNMTRVYYR) carry the Switch 2 motif. The S-palmitoyl cysteine moiety is linked to residue Cys-205. Cys-208 carries S-geranylgeranyl cysteine lipidation.

Belongs to the small GTPase superfamily. Rab family. As to quaternary structure, interacts with ANKRD27. Requires Mg(2+) as cofactor. Although at least one in vitro system can process and methylate the prenylated C-terminal, in an in vitro system that normally express Rab-38 and in vivo the prenylated C-terminal is not proteolytically processed and not methylated. As to expression, expressed in melanocytes.

The protein localises to the cell membrane. It localises to the melanosome. It is found in the cytoplasmic vesicle. The protein resides in the phagosome. Its subcellular location is the phagosome membrane. The protein localises to the melanosome membrane. The catalysed reaction is GTP + H2O = GDP + phosphate + H(+). Its activity is regulated as follows. Regulated by guanine nucleotide exchange factors (GEFs) including the BLOC-3 complex composed of HPS1 and HPS4 which promote the exchange of bound GDP for free GTP. Regulated by GTPase activating proteins (GAPs) including SGSM2 which increase the GTP hydrolysis activity. Inhibited by GDP dissociation inhibitors (GDIs). Functionally, the small GTPases Rab are key regulators of intracellular membrane trafficking, from the formation of transport vesicles to their fusion with membranes. Rabs cycle between an inactive GDP-bound form and an active GTP-bound form that is able to recruit to membranes different sets of downstream effectors directly responsible for vesicle formation, movement, tethering and fusion. RAB38 may be involved in melanosomal transport and docking. Involved in the proper sorting of TYRP1. Involved in peripheral melanosomal distribution of TYRP1 in melanocytes; the function, which probably is implicating vesicle-trafficking, includes cooperation with ANKRD27 and VAMP7. Plays a role in the maturation of phagosomes that engulf pathogens, such as S.aureus and M.tuberculosis. Plays an important role in the control of melanin production and melanosome biogenesis. In concert with RAB32, regulates the proper trafficking of melanogenic enzymes TYR, TYRP1 and DCT/TYRP2 to melanosomes in melanocytes. This is Ras-related protein Rab-38 from Homo sapiens (Human).